The primary structure comprises 100 residues: Large ribosomal subunit protein uL23 (100 aa).

This sequence belongs to the universal ribosomal protein uL23 family. In terms of assembly, part of the 50S ribosomal subunit. Contacts protein L29, and trigger factor when it is bound to the ribosome.

One of the early assembly proteins it binds 23S rRNA. One of the proteins that surrounds the polypeptide exit tunnel on the outside of the ribosome. Forms the main docking site for trigger factor binding to the ribosome. The chain is Large ribosomal subunit protein uL23 from Synechococcus sp. (strain CC9605).